The chain runs to 747 residues: Phosphoribosylformylglycinamidine synthase subunit PurL (747 aa).

Histidine 46 is a catalytic residue. Residues tyrosine 49 and lysine 88 each coordinate ATP. Glutamate 90 provides a ligand contact to Mg(2+). Substrate is bound by residues serine 91 to histidine 94 and arginine 113. Residue histidine 92 is the Proton acceptor of the active site. A Mg(2+)-binding site is contributed by aspartate 114. Glutamine 237 contributes to the substrate binding site. Aspartate 265 is a binding site for Mg(2+). Residue glutamate 309 to glutamine 311 participates in substrate binding. The ATP site is built by aspartate 493 and glycine 530. Asparagine 531 is a binding site for Mg(2+). Serine 533 contacts substrate.

The protein belongs to the FGAMS family. As to quaternary structure, monomer. Part of the FGAM synthase complex composed of 1 PurL, 1 PurQ and 2 PurS subunits.

It is found in the cytoplasm. The enzyme catalyses N(2)-formyl-N(1)-(5-phospho-beta-D-ribosyl)glycinamide + L-glutamine + ATP + H2O = 2-formamido-N(1)-(5-O-phospho-beta-D-ribosyl)acetamidine + L-glutamate + ADP + phosphate + H(+). It participates in purine metabolism; IMP biosynthesis via de novo pathway; 5-amino-1-(5-phospho-D-ribosyl)imidazole from N(2)-formyl-N(1)-(5-phospho-D-ribosyl)glycinamide: step 1/2. Functionally, part of the phosphoribosylformylglycinamidine synthase complex involved in the purines biosynthetic pathway. Catalyzes the ATP-dependent conversion of formylglycinamide ribonucleotide (FGAR) and glutamine to yield formylglycinamidine ribonucleotide (FGAM) and glutamate. The FGAM synthase complex is composed of three subunits. PurQ produces an ammonia molecule by converting glutamine to glutamate. PurL transfers the ammonia molecule to FGAR to form FGAM in an ATP-dependent manner. PurS interacts with PurQ and PurL and is thought to assist in the transfer of the ammonia molecule from PurQ to PurL. This is Phosphoribosylformylglycinamidine synthase subunit PurL from Deinococcus radiodurans (strain ATCC 13939 / DSM 20539 / JCM 16871 / CCUG 27074 / LMG 4051 / NBRC 15346 / NCIMB 9279 / VKM B-1422 / R1).